The chain runs to 85 residues: Large ribosomal subunit protein bL27 (85 aa).

The segment at 1–22 (MAHKKAGGSTRNGRDSESKRLG) is disordered.

It belongs to the bacterial ribosomal protein bL27 family.

The protein is Large ribosomal subunit protein bL27 of Marinomonas sp. (strain MWYL1).